The chain runs to 288 residues: uncharacterized protein (288 aa).

The first 27 residues, 1 to 27, serve as a signal peptide directing secretion; the sequence is MKFEFRTLVLISLAVVVVLSGCSQSPS. Positions 144 to 167 are disordered; the sequence is GESGEAGGAGEQLPASDQASGEEP.

This is an uncharacterized protein from Archaeoglobus fulgidus (strain ATCC 49558 / DSM 4304 / JCM 9628 / NBRC 100126 / VC-16).